Reading from the N-terminus, the 181-residue chain is UPF0302 protein LMHCC_0635 (181 aa).

It belongs to the UPF0302 family.

The chain is UPF0302 protein LMHCC_0635 from Listeria monocytogenes serotype 4a (strain HCC23).